The chain runs to 474 residues: MGSDGLQWVSRSLEHRPMTSLWRDIRHEVAAWLGSLKLAIGLFLAIAAASIAGTVIPQGESTDFYRQNYPDSGAVVWGFVTWRFIISLGLDEVYRSWWFVALLLLLATSLTICTFRRQIPMLKAAQNWKFYTEPRQLSKYALRTAIPARGTGPLAEQLRAGRYKVYQRDDLIYATKGTIGRVGPIVVHVSLLLIMAGAMIGAFGGYQTQRMTLAGDSFDIQQVEQSRLSLARPPDWTVRVNKFWIDYRPDGSVDQFHSDLSVVSPAGKELERKTISVNDPLIYDGVTMYQASWAVGAFKLRLNDSPVLTIPMQPIEAPNGQEAWGQAIPFDKDGRVALQMVTRGLQGSLMLLPFNPRTGETVREAATPARVGKPVSVLGQRLVIEELVGQTGIQIKADPGIPVVYAGFALLMVGLAMSYLSHSQVWAIYRDGQLHVAGRTNRAQIGFERELVRMVAAVQTPRPRTSDALSAAQE.

3 consecutive transmembrane segments (helical) span residues Leu36–Ile56, Ser96–Arg116, and Val182–Ala202.

This sequence belongs to the Ccs1/CcsB family. In terms of assembly, may interact with CcsA.

It is found in the cell inner membrane. Its function is as follows. Required during biogenesis of c-type cytochromes (cytochrome c6 and cytochrome f) at the step of heme attachment. The chain is Cytochrome c biogenesis protein CcsB from Gloeobacter violaceus (strain ATCC 29082 / PCC 7421).